Consider the following 319-residue polypeptide: MSAGGEHLKDEGQRYQVVAAGAIAGMVSRFCVAPLDVVKIRLQLQIHSLSDPLSHKNIRGPVYKGTISTLKAIFREEGITGLWKGNIPAELLYIFYGAIQFTTYRTVTQSLHTLPPPYRLPQPAESFVSGATAGGIGTFTTYPFDLLRTRFAAQGNDKIYPSLLTAIRSIHAHEGSRGFFRGVSAAVAQIVPYMGLFFATYESVRVPISSLHLPFGSGDATAGVIASVIAKTGVFPLDLVRKRLQVQGPTRSRYIHQNIPEYNGVLSTMKMVLRDGGVRGLYRGLTVSLIKAAPASAVTMWTYERVLKILKEINQEAIQ.

Solcar repeat units lie at residues 12 to 110, 121 to 207, and 214 to 309; these read GQRY…VTQS, PQPA…VRVP, and PFGS…VLKI. Transmembrane regions (helical) follow at residues 17 to 35, 91 to 107, 127 to 147, 182 to 201, 221 to 237, and 284 to 301; these read VVAA…VAPL, LLYI…YRTV, FVSG…FDLL, GVSA…FATY, TAGV…VFPL, and GLTV…VTMW.

The protein belongs to the mitochondrial carrier (TC 2.A.29) family.

The protein localises to the mitochondrion inner membrane. In terms of biological role, mitochondrial transporter that mediates uptake of thiamine pyrophosphate (ThPP) into mitochondria. The chain is Mitochondrial thiamine pyrophosphate carrier 1 (TPC1) from Coccidioides immitis (strain RS) (Valley fever fungus).